A 250-amino-acid polypeptide reads, in one-letter code: Aquaporin (250 aa).

Residues 1–15 lie on the Cytoplasmic side of the membrane; the sequence is MTRETLKTLQSTFGE. A helical transmembrane segment spans residues 16–36; it reads MVASFVFGFAVYSALLGSALT. Topologically, residues 37-42 are extracellular; it reads EQSAAR. The chain crosses the membrane as a helical span at residues 43-63; that stretch reads VIVGLTVGFSGICVIYSFCDV. Topologically, residues 64-86 are cytoplasmic; sequence TVAHFNPAITLAAILTCKLGVLR. Positions 69–71 match the NPA motif; that stretch reads NPA. A helical membrane pass occupies residues 87-107; the sequence is GIGYIVAQYIGFILAVCALLP. The Extracellular portion of the chain corresponds to 108–133; the sequence is CSPVGYKETLNIIRPTPSPFGGDNLN. Residues 134–154 form a helical membrane-spanning segment; that stretch reads VFFTEFFLTAILVHVAFATAV. At 155 to 179 the chain is on the cytoplasmic side; the sequence is NPYKPKTDTEGKFVDPDEEEPVDRR. A helical transmembrane segment spans residues 180 to 200; sequence ITAPLCIGLTLGFLAFLGLAS. At 201–224 the chain is on the extracellular side; that stretch reads SGGAFNPGLTLAPVIMSNTWNHFW. The NPG signature appears at 206–208; the sequence is NPG. The helical transmembrane segment at 225–245 threads the bilayer; the sequence is AYFAGQYLGGFVGGLLQVLVL. Over 246 to 250 the chain is Cytoplasmic; the sequence is YKLSF.

It belongs to the MIP/aquaporin (TC 1.A.8) family.

The protein localises to the cell membrane. Water channel required to facilitate the transport of water across membranes. Involved in osmotolerance. The polypeptide is Aquaporin (AQP) (Encephalitozoon cuniculi (strain GB-M1) (Microsporidian parasite)).